The primary structure comprises 453 residues: Lysine histidine transporter-like 1 (453 aa).

Residues 1–44 lie on the Cytoplasmic side of the membrane; sequence MYIQMTDGVPPPPEQSSLDHRIDELERQKEIDDWLPITSSRNAK. 2 consecutive transmembrane segments (helical) span residues 45–65 and 66–86; these read WWYS…LGLP and FFMA…SWII. Topologically, residues 87–122 are cytoplasmic; it reads TLYTLWQMVEMHEMVPGKRFDRYHELGQFAFGERLG. The helical transmembrane segment at 123–143 threads the bilayer; sequence LYIIVPQQIIVEVGVCIVYMV. Residues 144–164 are Extracellular-facing; sequence TGGQSLKKFHEIACQDCSPIR. The chain crosses the membrane as a helical span at residues 165–185; sequence LSFFIMIFASSHFVLSHLPNF. Over 186–187 the chain is Cytoplasmic; sequence NS. The helical transmembrane segment at 188–208 threads the bilayer; sequence ISGVSLVAAVMSLSYSTIAWT. Topologically, residues 209–231 are extracellular; that stretch reads ATAAKGVQEDVQYGYKSGTTAST. The helical transmembrane segment at 232-252 threads the bilayer; that stretch reads VLSFFTGLGGIAFAYAGHNVV. Residues 253–276 lie on the Cytoplasmic side of the membrane; the sequence is LEIQATIPSTPSNPSKGPMWRGVV. The helical transmembrane segment at 277-297 threads the bilayer; that stretch reads VAYVVVALCYFPVALVGYGVF. At 298 to 318 the chain is on the extracellular side; that stretch reads GNAVLDNVLMSLETPVWAIAT. A helical transmembrane segment spans residues 319-339; that stretch reads ANLFVVMHVIGSYQIFAMPVF. The Cytoplasmic segment spans residues 340 to 359; sequence DMVETFLVKKLNFKPSTVLR. A helical transmembrane segment spans residues 360–382; the sequence is FIVRNVYVALTMFIGIMIPFFGG. Residues 383–385 lie on the Extracellular side of the membrane; the sequence is LLA. The chain crosses the membrane as a helical span at residues 386 to 408; the sequence is FFGGFAFAPTSYFLPCIMWLLIY. The Cytoplasmic portion of the chain corresponds to 409-412; it reads KPKR. A helical transmembrane segment spans residues 413 to 433; it reads FSLSWWTNWVCIVLGVVLMIL. Residues 434 to 453 lie on the Extracellular side of the membrane; the sequence is SSIGGLRQIIIQSKDYSFFS.

This sequence belongs to the amino acid/polyamine transporter 2 family. Amino acid/auxin permease (AAAP) (TC 2.A.18.2) subfamily.

It localises to the cell membrane. In terms of biological role, amino acid transporter. This Arabidopsis thaliana (Mouse-ear cress) protein is Lysine histidine transporter-like 1.